The primary structure comprises 187 residues: Elongation factor P (187 aa).

This sequence belongs to the elongation factor P family.

It localises to the cytoplasm. It functions in the pathway protein biosynthesis; polypeptide chain elongation. Its function is as follows. Involved in peptide bond synthesis. Stimulates efficient translation and peptide-bond synthesis on native or reconstituted 70S ribosomes in vitro. Probably functions indirectly by altering the affinity of the ribosome for aminoacyl-tRNA, thus increasing their reactivity as acceptors for peptidyl transferase. This chain is Elongation factor P, found in Corynebacterium kroppenstedtii (strain DSM 44385 / JCM 11950 / CIP 105744 / CCUG 35717).